The following is a 194-amino-acid chain: Phosphoheptose isomerase (194 aa).

One can recognise an SIS domain in the interval Ile37 to Gly194. Residue Asn52–Gly54 coordinates substrate. His61 and Glu65 together coordinate Zn(2+). Substrate-binding positions include Glu65, Asn93–Asp94, Ser119–Ser121, Ser124, and Gln172. Zn(2+) is bound by residues Gln172 and His180.

The protein belongs to the SIS family. GmhA subfamily. Homotetramer. It depends on Zn(2+) as a cofactor.

Its subcellular location is the cytoplasm. The catalysed reaction is 2 D-sedoheptulose 7-phosphate = D-glycero-alpha-D-manno-heptose 7-phosphate + D-glycero-beta-D-manno-heptose 7-phosphate. The protein operates within carbohydrate biosynthesis; D-glycero-D-manno-heptose 7-phosphate biosynthesis; D-glycero-alpha-D-manno-heptose 7-phosphate and D-glycero-beta-D-manno-heptose 7-phosphate from sedoheptulose 7-phosphate: step 1/1. Catalyzes the isomerization of sedoheptulose 7-phosphate in D-glycero-D-manno-heptose 7-phosphate. The chain is Phosphoheptose isomerase from Sodalis glossinidius (strain morsitans).